Consider the following 318-residue polypeptide: Deoxyribose-phosphate aldolase (318 aa).

Asp155 (proton donor/acceptor) is an active-site residue. The active-site Schiff-base intermediate with acetaldehyde is the Lys218. Catalysis depends on Lys254, which acts as the Proton donor/acceptor.

This sequence belongs to the DeoC/FbaB aldolase family. DeoC type 2 subfamily. In terms of assembly, interacts with YBX1. As to expression, mainly expressed in liver, lung and colon.

The protein resides in the cytoplasm. The protein localises to the cytoplasmic granule. It is found in the nucleus. It catalyses the reaction 2-deoxy-D-ribose 5-phosphate = D-glyceraldehyde 3-phosphate + acetaldehyde. Its pathway is carbohydrate degradation; 2-deoxy-D-ribose 1-phosphate degradation; D-glyceraldehyde 3-phosphate and acetaldehyde from 2-deoxy-alpha-D-ribose 1-phosphate: step 2/2. Functionally, catalyzes a reversible aldol reaction between acetaldehyde and D-glyceraldehyde 3-phosphate to generate 2-deoxy-D-ribose 5-phosphate. Participates in stress granule (SG) assembly. May allow ATP production from extracellular deoxyinosine in conditions of energy deprivation. The sequence is that of Deoxyribose-phosphate aldolase (DERA) from Homo sapiens (Human).